The following is a 222-amino-acid chain: UPF0316 protein Mboo_0791 (222 aa).

3 helical membrane-spanning segments follow: residues 25 to 45, 67 to 87, and 93 to 113; these read FFLF…IFLA, LAPV…VGVL, and IAYF…GLVI.

It belongs to the UPF0316 family.

Its subcellular location is the cell membrane. The protein is UPF0316 protein Mboo_0791 of Methanoregula boonei (strain DSM 21154 / JCM 14090 / 6A8).